The primary structure comprises 254 residues: Chymotrypsin-like serine proteinase (254 aa).

The signal sequence occupies residues 1–18; it reads MNALLNILLCTLAATALA. Positions 19–23 are cleaved as a propeptide — activation peptide; that stretch reads EISPN. The Peptidase S1 domain occupies 24–254; it reads IVGGSNAAAG…SSFYNWVQTQ (231 aa). A disulfide bond links cysteine 53 and cysteine 69. Active-site charge relay system residues include histidine 68 and aspartate 117. Disulfide bonds link cysteine 146–cysteine 218, cysteine 181–cysteine 199, and cysteine 208–cysteine 233. Catalysis depends on serine 212, which acts as the Charge relay system.

It belongs to the peptidase S1 family. As to quaternary structure, monomer. Expressed specifically in the distal quarter of the intestine.

Its subcellular location is the secreted. It is found in the extracellular space. With respect to regulation, activated by an autocatalytic mechanism. Functionally, specificity similar to chymotrypsin. The chain is Chymotrypsin-like serine proteinase from Haliotis rufescens (California red abalone).